The sequence spans 161 residues: Phosphopantetheine adenylyltransferase (161 aa).

A substrate-binding site is contributed by Thr9. Residues 9 to 10 (TF) and His17 contribute to the ATP site. Residues Lys41, Leu73, and Arg87 each coordinate substrate. ATP contacts are provided by residues 88 to 90 (GLR), Glu98, and 123 to 129 (LSYISST).

Belongs to the bacterial CoaD family. Homohexamer. Mg(2+) is required as a cofactor.

Its subcellular location is the cytoplasm. The catalysed reaction is (R)-4'-phosphopantetheine + ATP + H(+) = 3'-dephospho-CoA + diphosphate. Its pathway is cofactor biosynthesis; coenzyme A biosynthesis; CoA from (R)-pantothenate: step 4/5. Its function is as follows. Reversibly transfers an adenylyl group from ATP to 4'-phosphopantetheine, yielding dephospho-CoA (dPCoA) and pyrophosphate. The chain is Phosphopantetheine adenylyltransferase from Hahella chejuensis (strain KCTC 2396).